We begin with the raw amino-acid sequence, 407 residues long: 3-oxoacyl-[acyl-carrier-protein] synthase 1 (407 aa).

Residues 1–405 (MKRVVITGLG…GTNVSLIIKK (405 aa)) form the Ketosynthase family 3 (KS3) domain. Catalysis depends on for beta-ketoacyl synthase activity residues C164, H299, and H335.

Belongs to the thiolase-like superfamily. Beta-ketoacyl-ACP synthases family. In terms of assembly, homodimer.

Its subcellular location is the cytoplasm. It carries out the reaction a fatty acyl-[ACP] + malonyl-[ACP] + H(+) = a 3-oxoacyl-[ACP] + holo-[ACP] + CO2. It catalyses the reaction (3Z)-decenoyl-[ACP] + malonyl-[ACP] + H(+) = 3-oxo-(5Z)-dodecenoyl-[ACP] + holo-[ACP] + CO2. It participates in lipid metabolism; fatty acid biosynthesis. In terms of biological role, involved in the type II fatty acid elongation cycle. Catalyzes the elongation of a wide range of acyl-ACP by the addition of two carbons from malonyl-ACP to an acyl acceptor. Can also use unsaturated fatty acids. Catalyzes a key reaction in unsaturated fatty acid (UFA) synthesis, the elongation of the cis-3-decenoyl-ACP produced by FabA. The chain is 3-oxoacyl-[acyl-carrier-protein] synthase 1 (fabB) from Buchnera aphidicola subsp. Baizongia pistaciae (strain Bp).